We begin with the raw amino-acid sequence, 424 residues long: 26S proteasome regulatory subunit 4 homolog (424 aa).

Over residues 1-11 the composition is skewed to basic and acidic residues; the sequence is MSRDKSERDNL. Positions 1-33 are disordered; it reads MSRDKSERDNLQDTTTINLRRRRRVKEGKAASK. 210–217 contributes to the ATP binding site; the sequence is GLPGTGKT.

This sequence belongs to the AAA ATPase family. The 26S proteasome consists of a 20S proteasome core and two 19S regulatory subunits. The 20S proteasome core is composed of 28 subunits that are arranged in four stacked rings, resulting in a barrel-shaped structure. The two end rings are each formed by seven alpha subunits, and the two central rings are each formed by seven beta subunits. The catalytic chamber with the active sites is on the inside of the barrel.

Its subcellular location is the cytoplasm. It localises to the nucleus. Acts as a regulatory subunit of the 26S proteasome which degrades poly-ubiquitinated proteins in the cytoplasm and in the nucleus. It is essential for the regulated turnover of proteins and for the removal of misfolded proteins. The proteasome is a multicatalytic proteinase complex that is characterized by its ability to cleave peptides with Arg, Phe, Tyr, Leu, and Glu adjacent to the leaving group at neutral or slightly basic pH. This Encephalitozoon cuniculi (strain GB-M1) (Microsporidian parasite) protein is 26S proteasome regulatory subunit 4 homolog (RPT2).